Here is a 230-residue protein sequence, read N- to C-terminus: RING finger protein 141 (230 aa).

Gly-2 is lipidated: N-myristoyl glycine. The RING-type zinc-finger motif lies at 155–192 (CCICMDGRADLILPCAHSFCQKCIDKWSDRHRNCPICR).

It is found in the membrane. May be involved in spermatogenesis. The protein is RING finger protein 141 (RNF141) of Pongo abelii (Sumatran orangutan).